The following is a 292-amino-acid chain: UPF0749 protein Mb1856 (292 aa).

The first 28 residues, 1–28 (MSENRPEPVAAETSAATTARHSQADAGA), serve as a signal peptide directing secretion. The disordered stretch occupies residues 1-30 (MSENRPEPVAAETSAATTARHSQADAGAHD). Transmembrane regions (helical) follow at residues 68-88 (VFGT…VTQV), 152-172 (AALS…MITI), and 229-249 (VLSP…AAAM).

It belongs to the UPF0749 family.

The protein localises to the cell membrane. The protein is UPF0749 protein Mb1856 of Mycobacterium bovis (strain ATCC BAA-935 / AF2122/97).